A 193-amino-acid chain; its full sequence is Fra a 1-associated protein (193 aa).

The interval 1-27 is disordered; that stretch reads MGWVWKDDDEQGGHVNPSAADISPRLD.

Interacts with FRAA1E, FRAA2 and FRAA3.

This Fragaria ananassa (Strawberry) protein is Fra a 1-associated protein.